A 230-amino-acid polypeptide reads, in one-letter code: Ribosomal RNA small subunit methyltransferase G (230 aa).

S-adenosyl-L-methionine-binding positions include G93, L98, 144–145, and R158; that span reads IE.

This sequence belongs to the methyltransferase superfamily. RNA methyltransferase RsmG family.

The protein resides in the cytoplasm. The catalysed reaction is guanosine(527) in 16S rRNA + S-adenosyl-L-methionine = N(7)-methylguanosine(527) in 16S rRNA + S-adenosyl-L-homocysteine. Functionally, specifically methylates the N7 position of guanine in position 527 of 16S rRNA. The protein is Ribosomal RNA small subunit methyltransferase G of Bordetella parapertussis (strain 12822 / ATCC BAA-587 / NCTC 13253).